The chain runs to 345 residues: Anthranilate phosphoribosyltransferase (345 aa).

5-phospho-alpha-D-ribose 1-diphosphate-binding positions include glycine 83, 86–87 (GD), threonine 91, 93–96 (NIST), 111–119 (KHGNRNLSS), and serine 123. Residue glycine 83 participates in anthranilate binding. Serine 95 is a Mg(2+) binding site. Asparagine 114 is a binding site for anthranilate. Residue arginine 169 participates in anthranilate binding. Mg(2+)-binding residues include aspartate 228 and glutamate 229.

The protein belongs to the anthranilate phosphoribosyltransferase family. As to quaternary structure, homodimer. Requires Mg(2+) as cofactor.

It catalyses the reaction N-(5-phospho-beta-D-ribosyl)anthranilate + diphosphate = 5-phospho-alpha-D-ribose 1-diphosphate + anthranilate. The protein operates within amino-acid biosynthesis; L-tryptophan biosynthesis; L-tryptophan from chorismate: step 2/5. In terms of biological role, catalyzes the transfer of the phosphoribosyl group of 5-phosphorylribose-1-pyrophosphate (PRPP) to anthranilate to yield N-(5'-phosphoribosyl)-anthranilate (PRA). The polypeptide is Anthranilate phosphoribosyltransferase (Paracoccus denitrificans (strain Pd 1222)).